A 175-amino-acid polypeptide reads, in one-letter code: Cytochrome c homolog (175 aa).

The Cytoplasmic portion of the chain corresponds to 1 to 8 (MSGKELNK). The chain crosses the membrane as a helical; Signal-anchor span at residues 9 to 29 (IVAAILFASLIAMMVGFVANI). Topologically, residues 30-175 (LYKPTLELQH…LFLKTYVHDK (146 aa)) are periplasmic. Heme c is bound by residues Cys-84, Cys-87, His-88, and Met-150.

This sequence belongs to the cytochrome c family. In terms of processing, binds 1 heme c group covalently per subunit.

It is found in the cell membrane. May be involved in electron transfer from bc1 complex to aa3. This chain is Cytochrome c homolog (cycM), found in Rickettsia felis (strain ATCC VR-1525 / URRWXCal2) (Rickettsia azadi).